The chain runs to 114 residues: Small ribosomal subunit protein uS17 (114 aa).

It belongs to the universal ribosomal protein uS17 family. As to quaternary structure, part of the 30S ribosomal subunit.

Functionally, one of the primary rRNA binding proteins, it binds specifically to the 5'-end of 16S ribosomal RNA. The protein is Small ribosomal subunit protein uS17 of Aeropyrum pernix (strain ATCC 700893 / DSM 11879 / JCM 9820 / NBRC 100138 / K1).